A 1096-amino-acid chain; its full sequence is MAEGAASREAPAPLDVAGGEDDPRAGADAASGDAPPPALGGRMRDRRSGVALPGAAGVPADSEAGLLEAARATPRRSSIIKDPSNQKCGGRKKTVSFSSMPSEKKISSAHDCISFMQAGCELKKVRPNSRIYNRFFTLDTDLQALRWEPSKKDLEKAKLDISAIKEIRLGKNTETFRNNGLADQICEDCAFSILHGENYESLDLVANSADVANIWVSGLRYLVSRSKQPLDFIEGNQNTPRFMWLKTVFEAADVDGNGIMLEDTSVELIKQLNPTLKESKIRLKFKEIQKSKEKLTTRVTEEEFCEAFCELCTRPEVYFLLVQISKNKEYLDANDLMLFLEAEQGVTHITEDMCLDIIRRYELSEDGRQKGFLAIDGFTQYLLSPECDIFDPEQKKVAQDMTQPLSHYYINASHNTYLIEDQFRGPADINGYVRALKMGCRSIELDVSDGPDNEPILCNRNNMAMHLSFRSVLEVINKFAFVASEYPLILCLGNHCSLPQQKVMAQQMKKVFGEKLYTEAPLSSESYLPSPEKLKNMIIVKGKKLPSESDLLEGEVTDEDEEAEMSRRMSGDYNGEQKHIWLCRELSDLVSICKSVQHRDFELSMKTQNYWEMCSFSETEASRIANEYPEDFVNYNKKFLSRVYPSAMRIDSSNLNPQDFWNCGCQIVAMNFQTPGPMMDLHTGWFLQNGGCGYVLRPSIMRDEVSYFSANTKGIVPGVSPLVLHIKIISGQNFPKPKGACAKGDVIDPYVCVEIHGIPADCCEQRTKTVQQNSDNPIFDETFEFQVNLPELTMVRFVILDDDYIGDEFIGQYTIPFECLQPGYRHVPLRSFVGDIMEHVTLFVHIAITNRSGGGKPQKRSLSVRMGKKVREYTMLRNIGLKTIDDIFKIAVHPLREAIDMRENMQNAIVSVKELCGLPPIASLKQCLLTLSSRLITSDSTPSVSLVMKDCFPYLEPLGAIPDVQKRMLAAYDLMIQESRVLIEMADTVQEKIVQCQKAGMEFHEELHNLGAKEGLKGRKLNKAIESFAWNITVLKGQGDLLKNAKNEAVENIKQIQLACLSCGLSKGPGGGSEAKGKRSLEAIEEKESSEENGKL.

The segment at 1 to 101 (MAEGAASREA…KKTVSFSSMP (101 aa)) is disordered. Position 48 is a phosphoserine (serine 48). A compositionally biased stretch (low complexity) spans 49 to 60 (GVALPGAAGVPA). Position 78 is a phosphoserine (serine 78). Residues 83–222 (PSNQKCGGRK…NIWVSGLRYL (140 aa)) are interaction with PPP1C. Threonine 94 is subject to Phosphothreonine. Threonine 94 bears the Phosphothreonine; by PKA mark. Serine 96 is modified (phosphoserine; by PKA). The 111-residue stretch at 114–224 (SFMQAGCELK…WVSGLRYLVS (111 aa)) folds into the PH domain. One can recognise a PI-PLC X-box domain in the interval 399 to 543 (QDMTQPLSHY…LKNMIIVKGK (145 aa)). The interval 544–568 (KLPSESDLLEGEVTDEDEEAEMSRR) is interaction with GABA A beta subunit. Residues 550-563 (DLLEGEVTDEDEEA) show a composition bias toward acidic residues. A disordered region spans residues 550–569 (DLLEGEVTDEDEEAEMSRRM). Phosphothreonine is present on threonine 557. Serine 570 is subject to Phosphoserine. A PI-PLC Y-box domain is found at 586–702 (LSDLVSICKS…GYVLRPSIMR (117 aa)). In terms of domain architecture, C2 spans 702–831 (RDEVSYFSAN…PGYRHVPLRS (130 aa)). The stretch at 1040–1060 (DLLKNAKNEAVENIKQIQLAC) forms a coiled coil. A disordered region spans residues 1067 to 1096 (KGPGGGSEAKGKRSLEAIEEKESSEENGKL). A compositionally biased stretch (basic and acidic residues) spans 1075–1096 (AKGKRSLEAIEEKESSEENGKL). Serine 1080 carries the post-translational modification Phosphoserine.

In terms of assembly, interacts with PPP2CA, Ins(1,4,5)P3, Ins(1,4,5,6)P4 GABARAP, GABA receptor beta subunits, GABA receptor gamma-2 subunits and PPP1C. May form a ternary complex with GABA receptor beta subunit and GABARAP. The formation of a ternary complex with GABA receptor beta subunit and GABARAP could be the key step for facilitating the association of GABARAP with the GABA receptor gamma-2 subunit and to allow it to be transported at the right destination. Post-translationally, phosphorylated by the catalytic subunit of PKA. Phosphorylation of Thr-94 resulted in dissociation of PPP1C from PRIP1.

The protein localises to the cytoplasm. Its function is as follows. Involved in an inositol phospholipid-based intracellular signaling cascade. Shows no PLC activity to phosphatidylinositol 4,5-bisphosphate and phosphatidylinositol. Component in the phospho-dependent endocytosis process of GABA A receptor. Acts as an inhibitor of PPP1C. Involved in the assembly and/or the trafficking of gamma-2 subunit-containing GABA A receptors. This is Inactive phospholipase C-like protein 1 (Plcl1) from Mus musculus (Mouse).